The primary structure comprises 170 residues: Guided entry of tail-anchored proteins factor 1 (170 aa).

The Lumenal portion of the chain corresponds to 1-6; it reads MAAGFN. The helical transmembrane segment at 7–27 threads the bilayer; it reads WFLVLSSVFLCNLVKTFLPSI. Over 28–96 the chain is Cytoplasmic; it reads SSFLSKIFHK…KSRTAQQAKM (69 aa). The interaction with GET3/TRC40 stretch occupies residues 35–93; the sequence is FHKDADQEMEMRTEIQNMKMELSTISMMDEFARYARLERKINKMTDQLKTLVKSRTAQQ. The stretch at 61-91 forms a coiled coil; it reads MMDEFARYARLERKINKMTDQLKTLVKSRTA. A helical membrane pass occupies residues 97-117; that stretch reads KWIVNIAFYILQAALMISLIL. The Lumenal portion of the chain corresponds to 118–137; sequence KYYADPVTVVPSKWIAPLER. The chain crosses the membrane as a helical span at residues 138 to 158; sequence LVAFPSGVAGGVGITCWLVVC. Residues 159–170 lie on the Cytoplasmic side of the membrane; it reads NKVVALILQAVS.

The protein belongs to the WRB/GET1 family. Component of the Golgi to ER traffic (GET) complex, which is composed of GET1/WRB, CAMLG/GET2 and GET3/TRC40. Within the complex, GET1 and CAMLG form a heterotetramer which is stabilized by phosphatidylinositol binding and which binds to the GET3 homodimer.

The protein resides in the endoplasmic reticulum membrane. In terms of biological role, required for the post-translational delivery of tail-anchored (TA) proteins to the endoplasmic reticulum (ER). Together with CAMLG/GET2, acts as a membrane receptor for soluble GET3/TRC40, which recognizes and selectively binds the transmembrane domain of TA proteins in the cytosol. Required to ensure correct topology and ER insertion of CAMLG. This Danio rerio (Zebrafish) protein is Guided entry of tail-anchored proteins factor 1.